Consider the following 60-residue polypeptide: Protein MGF 360-5L (60 aa).

The protein belongs to the asfivirus MGF 360 family.

Functionally, plays a role in virus cell tropism, and may be required for efficient virus replication in macrophages. The sequence is that of Protein MGF 360-5L from Ornithodoros (relapsing fever ticks).